A 115-amino-acid polypeptide reads, in one-letter code: Large ribosomal subunit protein bL21 (115 aa).

This sequence belongs to the bacterial ribosomal protein bL21 family. In terms of assembly, part of the 50S ribosomal subunit. Contacts protein L20.

Its function is as follows. This protein binds to 23S rRNA in the presence of protein L20. In Coxiella burnetii (strain Dugway 5J108-111), this protein is Large ribosomal subunit protein bL21.